The following is a 344-amino-acid chain: Uroporphyrinogen decarboxylase (344 aa).

Substrate contacts are provided by residues 25–29 (RQAGR), Asp-75, Tyr-152, Ser-207, and His-323.

The protein belongs to the uroporphyrinogen decarboxylase family. In terms of assembly, homodimer.

Its subcellular location is the cytoplasm. It carries out the reaction uroporphyrinogen III + 4 H(+) = coproporphyrinogen III + 4 CO2. Its pathway is porphyrin-containing compound metabolism; protoporphyrin-IX biosynthesis; coproporphyrinogen-III from 5-aminolevulinate: step 4/4. Its function is as follows. Catalyzes the decarboxylation of four acetate groups of uroporphyrinogen-III to yield coproporphyrinogen-III. This is Uroporphyrinogen decarboxylase from Roseobacter denitrificans (strain ATCC 33942 / OCh 114) (Erythrobacter sp. (strain OCh 114)).